Reading from the N-terminus, the 90-residue chain is MALPRITQKEMTEREQRELKTLLDRARIAHGRVLTNSETNSIKKDYIDKLMVEREAEAKKARQLKKKQAYKPDPEASFSWSANTSTRGRR.

The disordered stretch occupies residues 62–90; it reads RQLKKKQAYKPDPEASFSWSANTSTRGRR. Polar residues predominate over residues 78-90; the sequence is FSWSANTSTRGRR.

This is an uncharacterized protein from Escherichia coli (strain K12).